We begin with the raw amino-acid sequence, 187 residues long: Adenylate kinase (187 aa).

An ATP-binding site is contributed by 10 to 15 (GSGKGT). The segment at 30–59 (STGDMLRAEIAAGSELGKQAKAVMDAGNLV) is NMP. Residues Thr-31, Arg-36, 57–59 (NLV), 85–88 (GYPR), and Gln-92 each bind AMP. Residues 126–136 (GRAKEQGRADD) are LID. Arg-127 lines the ATP pocket. Residues Arg-133 and Arg-144 each contribute to the AMP site. Gly-172 is an ATP binding site.

This sequence belongs to the adenylate kinase family. In terms of assembly, monomer.

Its subcellular location is the cytoplasm. It catalyses the reaction AMP + ATP = 2 ADP. It functions in the pathway purine metabolism; AMP biosynthesis via salvage pathway; AMP from ADP: step 1/1. Its function is as follows. Catalyzes the reversible transfer of the terminal phosphate group between ATP and AMP. Plays an important role in cellular energy homeostasis and in adenine nucleotide metabolism. This is Adenylate kinase from Stenotrophomonas maltophilia (strain R551-3).